The sequence spans 142 residues: Truncated non-functional hemagglutinin-esterase homolog (142 aa).

Topologically, residues 1–117 (MNFTVPVQAI…ESVDVISSSY (117 aa)) are virion surface. N-linked (GlcNAc...) asparagine; by host glycosylation is present at Asn-2. Cys-28 and Cys-33 are oxidised to a cystine. N-linked (GlcNAc...) asparagine; by host glycans are attached at residues Asn-46 and Asn-67. Residues Cys-70 and Cys-95 are joined by a disulfide bond. A helical membrane pass occupies residues 118–138 (FVATWVLLVVVIILVFIIISF). Topologically, residues 139–142 (CISN) are intravirion.

It belongs to the influenza type C/coronaviruses hemagglutinin-esterase family. As to quaternary structure, homodimer. Post-translationally, N-glycosylated.

It localises to the virion membrane. The protein resides in the host cell membrane. In Berne virus (BEV), this protein is Truncated non-functional hemagglutinin-esterase homolog (HE).